Reading from the N-terminus, the 189-residue chain is dTTP/UTP pyrophosphatase (189 aa).

Asp-64 serves as the catalytic Proton acceptor.

It belongs to the Maf family. YhdE subfamily. Requires a divalent metal cation as cofactor.

The protein resides in the cytoplasm. It catalyses the reaction dTTP + H2O = dTMP + diphosphate + H(+). The enzyme catalyses UTP + H2O = UMP + diphosphate + H(+). Its function is as follows. Nucleoside triphosphate pyrophosphatase that hydrolyzes dTTP and UTP. May have a dual role in cell division arrest and in preventing the incorporation of modified nucleotides into cellular nucleic acids. In Syntrophomonas wolfei subsp. wolfei (strain DSM 2245B / Goettingen), this protein is dTTP/UTP pyrophosphatase.